We begin with the raw amino-acid sequence, 248 residues long: Cytochrome c oxidase subunit 2 (248 aa).

The Mitochondrial intermembrane segment spans residues 1 to 39 (MMKELLMNNMLNDVPTPWAMYFQDSATPNMEGIMELHNN). The chain crosses the membrane as a helical span at residues 40 to 56 (VVFYLIIMLCFVTYMLY). The Mitochondrial matrix segment spans residues 57 to 87 (NISTVYNKSAVAYKYMNHGQFIEMVWTTFPA). Residues 88–104 (VMLLIMAFPSFMLLYIC) traverse the membrane as a helical segment. Topologically, residues 105-248 (DEVMAPAMTI…ADFLTWIDEQ (144 aa)) are mitochondrial intermembrane. Positions 183, 218, 220, 222, 226, and 229 each coordinate Cu cation. Glu220 serves as a coordination point for Mg(2+).

It belongs to the cytochrome c oxidase subunit 2 family. In terms of assembly, component of the cytochrome c oxidase (complex IV, CIV), a multisubunit enzyme composed of a catalytic core of 3 subunits and several supernumerary subunits. The complex exists as a monomer or a dimer and forms supercomplexes (SCs) in the inner mitochondrial membrane with ubiquinol-cytochrome c oxidoreductase (cytochrome b-c1 complex, complex III, CIII). Cu cation is required as a cofactor.

The protein localises to the mitochondrion inner membrane. The enzyme catalyses 4 Fe(II)-[cytochrome c] + O2 + 8 H(+)(in) = 4 Fe(III)-[cytochrome c] + 2 H2O + 4 H(+)(out). Its function is as follows. Component of the cytochrome c oxidase, the last enzyme in the mitochondrial electron transport chain which drives oxidative phosphorylation. The respiratory chain contains 3 multisubunit complexes succinate dehydrogenase (complex II, CII), ubiquinol-cytochrome c oxidoreductase (cytochrome b-c1 complex, complex III, CIII) and cytochrome c oxidase (complex IV, CIV), that cooperate to transfer electrons derived from NADH and succinate to molecular oxygen, creating an electrochemical gradient over the inner membrane that drives transmembrane transport and the ATP synthase. Cytochrome c oxidase is the component of the respiratory chain that catalyzes the reduction of oxygen to water. Electrons originating from reduced cytochrome c in the intermembrane space (IMS) are transferred via the dinuclear copper A center (CU(A)) of subunit 2 and heme A of subunit 1 to the active site in subunit 1, a binuclear center (BNC) formed by heme A3 and copper B (CU(B)). The BNC reduces molecular oxygen to 2 water molecules using 4 electrons from cytochrome c in the IMS and 4 protons from the mitochondrial matrix. The sequence is that of Cytochrome c oxidase subunit 2 (COX2) from Brettanomyces naardenensis (Yeast).